A 274-amino-acid polypeptide reads, in one-letter code: Eukaryotic translation initiation factor 3 subunit G (274 aa).

Phosphoserine occurs at positions 146, 164, and 171. The disordered stretch occupies residues Ala-149 to Pro-170. The region spanning Thr-191–Lys-270 is the RRM domain.

It belongs to the eIF-3 subunit G family. In terms of assembly, component of the eukaryotic translation initiation factor 3 (eIF-3) complex.

It localises to the cytoplasm. RNA-binding component of the eukaryotic translation initiation factor 3 (eIF-3) complex, which is involved in protein synthesis of a specialized repertoire of mRNAs and, together with other initiation factors, stimulates binding of mRNA and methionyl-tRNAi to the 40S ribosome. The eIF-3 complex specifically targets and initiates translation of a subset of mRNAs involved in cell proliferation. This subunit can bind 18S rRNA. This is Eukaryotic translation initiation factor 3 subunit G from Meyerozyma guilliermondii (strain ATCC 6260 / CBS 566 / DSM 6381 / JCM 1539 / NBRC 10279 / NRRL Y-324) (Yeast).